The chain runs to 269 residues: Probable cysteine protease avirulence protein AvrPpiC2 (269 aa).

The disordered stretch occupies residues 1-39; sequence MTIVSGHIGKHPSLTTVQAGSSASVENQMPDPAQFSDGR. A compositionally biased stretch (polar residues) spans 13–27; it reads SLTTVQAGSSASVEN. Catalysis depends on residues cysteine 72, histidine 213, and aspartate 230.

It belongs to the peptidase C58 family.

Potential cysteine protease. Avirulence protein, which may be essential during infection of plant cells from Pea and some Arabidopsis thaliana cultivars. May act by affecting the plant defense system. In plants lacking appropriate resistance (R) gene, it probably impairs the plant defense system and leads to the bacteria multiplication. In contrast, in plants containing the appropriate R protein, it is unable to induce disease symptoms, explaining its avirulence name. The polypeptide is Probable cysteine protease avirulence protein AvrPpiC2 (avrPpiC2) (Pseudomonas syringae pv. pisi).